Consider the following 240-residue polypeptide: Uridylate kinase (240 aa).

ATP is bound at residue 12–15 (KISG). The interval 20 to 25 (GNQGFG) is involved in allosteric activation by GTP. UMP is bound at residue glycine 54. Glycine 55 and arginine 59 together coordinate ATP. Residues aspartate 74 and 135-142 (TGNPYFST) contribute to the UMP site. Residues tyrosine 168 and aspartate 171 each contribute to the ATP site.

The protein belongs to the UMP kinase family. Homohexamer.

The protein resides in the cytoplasm. It carries out the reaction UMP + ATP = UDP + ADP. Its pathway is pyrimidine metabolism; CTP biosynthesis via de novo pathway; UDP from UMP (UMPK route): step 1/1. Its activity is regulated as follows. Allosterically activated by GTP. Inhibited by UTP. Its function is as follows. Catalyzes the reversible phosphorylation of UMP to UDP. The polypeptide is Uridylate kinase (Moorella thermoacetica (strain ATCC 39073 / JCM 9320)).